The sequence spans 245 residues: 1-(5-phosphoribosyl)-5-[(5-phosphoribosylamino)methylideneamino] imidazole-4-carboxamide isomerase (245 aa).

Aspartate 7 serves as the catalytic Proton acceptor. Aspartate 129 functions as the Proton donor in the catalytic mechanism.

Belongs to the HisA/HisF family.

It localises to the cytoplasm. It catalyses the reaction 1-(5-phospho-beta-D-ribosyl)-5-[(5-phospho-beta-D-ribosylamino)methylideneamino]imidazole-4-carboxamide = 5-[(5-phospho-1-deoxy-D-ribulos-1-ylimino)methylamino]-1-(5-phospho-beta-D-ribosyl)imidazole-4-carboxamide. Its pathway is amino-acid biosynthesis; L-histidine biosynthesis; L-histidine from 5-phospho-alpha-D-ribose 1-diphosphate: step 4/9. The polypeptide is 1-(5-phosphoribosyl)-5-[(5-phosphoribosylamino)methylideneamino] imidazole-4-carboxamide isomerase (Serratia proteamaculans (strain 568)).